The chain runs to 303 residues: Caspase-7 (303 aa).

A compositionally biased stretch (acidic residues) spans 1 to 21 (MADDQGCIEEQGVEDSANEDS). The segment at 1-30 (MADDQGCIEEQGVEDSANEDSVDAKPDRSS) is disordered. Ala2 is modified (N-acetylalanine). A propeptide spans 2 to 23 (ADDQGCIEEQGVEDSANEDSVD) (N-terminally processed). At Ser30 the chain carries Phosphoserine; by PAK2. Ser37 carries the post-translational modification Phosphoserine. The exosite stretch occupies residues 38–41 (KKKK). Residues 76-87 (KNFDKVTGMGVR) are loop L1. His144 is a catalytic residue. A Phosphothreonine; by PAK2 modification is found at Thr173. Cys186 is a catalytic residue. The segment at 187–196 (RGTELDDGIQ) is loop L2. Positions 199–206 (SGPINDTD) are excised as a propeptide. Residues 226–238 (VPGYYSWRSPGRG) form a loop L3 region. The residue at position 233 (Arg233) is a (Microbial infection) ADP-riboxanated arginine. Ser239 carries the post-translational modification Phosphoserine; by PAK2. The interval 274-288 (ESQSDDPHFHEKKQI) is loop L4.

The protein belongs to the peptidase C14A family. In terms of assembly, heterotetramer that consists of two anti-parallel arranged heterodimers, each one formed by a 20 kDa (p20) and a 11 kDa (p11) subunit. Interacts with XIAP (via its second BIR domain); inhibiting CASP7 activity. Interacts with BIRC6/bruce. Interacts with ATXN3 (short isoform 1). Interacts with HSPA5. In terms of processing, cleavage by different proteases, such as granzyme B (GZMB), caspase-1 (CASP1), caspase-8 (CASP8), caspase-9 (CASP9) or caspase-10 (CASP10) generate the two active subunits. Its involvement in different programmed cell death processes is probably specified by the protease that activates CASP7. Cleaved and activated by initiator caspases (CASP8, CASP9 and/or CASP10), leading to execution phase of apoptosis. Cleavage and maturation by GZMB regulates granzyme-mediated programmed cell death. Cleaved and activated by CASP1 in response to bacterial infection. Propeptide domains can also be cleaved efficiently by CASP3. Active heterodimers between the small subunit of caspase-7 and the large subunit of CASP3, and vice versa, also occur. Also cleaved at the N-terminus at alternative sites by CAPN1, leading to its activation. Post-translationally, phosphorylation at Ser-30 and Ser-239 by PAK2 inhibits its activity. Phosphorylation at Ser-30 prevents cleavage and activation by initiator caspase CASP9, while phosphorylation at Ser-239 prevents thiol protease activity by preventing substrate-binding. (Microbial infection) ADP-riboxanation by C.violaceum CopC blocks CASP7 processing, preventing CASP7 activation and ability to recognize and cleave substrates. In terms of processing, ubiquitinated by BIRC6; this activity is inhibited by DIABLO/SMAC. As to expression, highly expressed in lung, skeletal muscle, liver, kidney, spleen and heart, and moderately in testis. No expression in the brain.

It localises to the cytoplasm. Its subcellular location is the cytosol. The protein localises to the nucleus. It is found in the secreted. The protein resides in the extracellular space. The catalysed reaction is Strict requirement for an Asp residue at position P1 and has a preferred cleavage sequence of Asp-Glu-Val-Asp-|-.. With respect to regulation, during activation, the N-terminal disordered prodomain is removed by cleavage. Concomitantly, double cleavage gives rise to a large Caspase-7 subunit p20 and a small Caspase-7 subunit p11. The two large and two small subunits then assemble to form the active CASP7 complex. Can be cleaved and activated by different caspases, depending on the context. Cleaved and activated by initiator caspases (CASP8, CASP9 and/or CASP10), leading to execution phase of apoptosis. Inhibited by XIAP, which directly binds to the active site pocket and obstructs substrate entry. Cleavage and maturation by GZMB regulates granzyme-mediated programmed cell death. Cleavage and maturation by CASP1 regulates pyroptosis. Phosphorylation at Ser-30 and Ser-239 by PAK2 inhibits its activity. Inhibited by isatin sulfonamides. Inhibited by 2-(2,4-Dichlorophenoxy)- N-(2-mercapto-ethyl)-acetamide (DICA) and 5-Fluoro-1H-indole-2- carboxylic acid (2-mercapto-ethyl)-amide (FICA) allosteric inhibitors, which disrupt an interaction between Arg-187 and Tyr-223. Specifically inhibited by DARPin D7.18 and D7.43, which specifically bind to the precursor CASP7 and prevent its processing and activation. Inhibited by BIRC6; following inhibition of BIRC6-caspase binding by DIABLO/SMAC, BIRC6 is subjected to caspase cleavage, leading to an increase in active caspases. In terms of biological role, thiol protease involved in different programmed cell death processes, such as apoptosis, pyroptosis or granzyme-mediated programmed cell death, by proteolytically cleaving target proteins. Has a marked preference for Asp-Glu-Val-Asp (DEVD) consensus sequences, with some plasticity for alternate non-canonical sequences. Its involvement in the different programmed cell death processes is probably determined by upstream proteases that activate CASP7. Acts as an effector caspase involved in the execution phase of apoptosis: following cleavage and activation by initiator caspases (CASP8, CASP9 and/or CASP10), mediates execution of apoptosis by catalyzing cleavage of proteins, such as CLSPN, PARP1, PTGES3 and YY1. Compared to CASP3, acts as a minor executioner caspase and cleaves a limited set of target proteins. Acts as a key regulator of the inflammatory response in response to bacterial infection by catalyzing cleavage and activation of the sphingomyelin phosphodiesterase SMPD1 in the extracellular milieu, thereby promoting membrane repair. Regulates pyroptosis in intestinal epithelial cells: cleaved and activated by CASP1 in response to S.typhimurium infection, promoting its secretion to the extracellular milieu, where it catalyzes activation of SMPD1, generating ceramides that repair membranes and counteract the action of gasdermin-D (GSDMD) pores. Regulates granzyme-mediated programmed cell death in hepatocytes: cleaved and activated by granzyme B (GZMB) in response to bacterial infection, promoting its secretion to the extracellular milieu, where it catalyzes activation of SMPD1, generating ceramides that repair membranes and counteract the action of perforin (PRF1) pores. Following cleavage by CASP1 in response to inflammasome activation, catalyzes processing and inactivation of PARP1, alleviating the transcription repressor activity of PARP1. Acts as an inhibitor of type I interferon production during virus-induced apoptosis by mediating cleavage of antiviral proteins CGAS, IRF3 and MAVS, thereby preventing cytokine overproduction. Cleaves and activates sterol regulatory element binding proteins (SREBPs). Cleaves phospholipid scramblase proteins XKR4, XKR8 and XKR9. In case of infection, catalyzes cleavage of Kaposi sarcoma-associated herpesvirus protein ORF57, thereby preventing expression of viral lytic genes. Cleaves BIRC6 following inhibition of BIRC6-caspase binding by DIABLO/SMAC. Lacks enzymatic activity. This Homo sapiens (Human) protein is Caspase-7.